The primary structure comprises 498 residues: Pyridine nucleotide-disulfide oxidoreductase domain-containing protein 1 (498 aa).

At methionine 1 the chain carries N-acetylmethionine.

It belongs to the class-I pyridine nucleotide-disulfide oxidoreductase family. PYROXD1 subfamily. FAD serves as cofactor.

It localises to the nucleus. The protein resides in the cytoplasm. It is found in the myofibril. The protein localises to the sarcomere. In terms of biological role, probable FAD-dependent oxidoreductase; involved in the cellular oxidative stress response. Required for normal sarcomere structure and muscle fiber integrity. This is Pyridine nucleotide-disulfide oxidoreductase domain-containing protein 1 (Pyroxd1) from Rattus norvegicus (Rat).